The sequence spans 287 residues: uncharacterized protein (287 aa).

Over residues 1 to 17 the composition is skewed to basic and acidic residues; it reads MRWQGRRESDNVEDRRN. Residues 1-29 form a disordered region; the sequence is MRWQGRRESDNVEDRRNSSGGPSMGGPGF. A helical membrane pass occupies residues 38 to 60; that stretch reads LILLIVVLVAGYYGVDLTGLMTG.

The protein resides in the membrane. This is an uncharacterized protein from Escherichia coli O6:H1 (strain CFT073 / ATCC 700928 / UPEC).